The chain runs to 74 residues: Kappa-scoloptoxin(07)-Ssm2f (74 aa).

Positions 1-19 (MLVFYAILFVTVFSNTVMG) are cleaved as a signal peptide. Residues 20 to 41 (ATIDKPIPKPIFREAIEEMEVN) constitute a propeptide that is removed on maturation.

Belongs to the scoloptoxin-07 family. Contains 3 disulfide bonds. Expressed by the venom gland.

The protein resides in the secreted. Inhibits voltage-gated potassium channels. In Scolopendra mutilans (Chinese red-headed centipede), this protein is Kappa-scoloptoxin(07)-Ssm2f.